Reading from the N-terminus, the 187-residue chain is Elongation factor P 2 (187 aa).

This sequence belongs to the elongation factor P family.

The protein resides in the cytoplasm. It participates in protein biosynthesis; polypeptide chain elongation. Functionally, involved in peptide bond synthesis. Stimulates efficient translation and peptide-bond synthesis on native or reconstituted 70S ribosomes in vitro. Probably functions indirectly by altering the affinity of the ribosome for aminoacyl-tRNA, thus increasing their reactivity as acceptors for peptidyl transferase. This Geobacter sulfurreducens (strain ATCC 51573 / DSM 12127 / PCA) protein is Elongation factor P 2.